A 178-amino-acid chain; its full sequence is Large ribosomal subunit protein uL6 (178 aa).

The protein belongs to the universal ribosomal protein uL6 family. In terms of assembly, part of the 50S ribosomal subunit.

Functionally, this protein binds to the 23S rRNA, and is important in its secondary structure. It is located near the subunit interface in the base of the L7/L12 stalk, and near the tRNA binding site of the peptidyltransferase center. The polypeptide is Large ribosomal subunit protein uL6 (Campylobacter jejuni subsp. jejuni serotype O:2 (strain ATCC 700819 / NCTC 11168)).